Consider the following 683-residue polypeptide: Solute carrier organic anion transporter family member 2B1 (683 aa).

The tract at residues 1-30 is disordered; sequence MPDRSTKTTMGTEDMHERKVSVEPQDSHQD. Topologically, residues 1-41 are cytoplasmic; it reads MPDRSTKTTMGTEDMHERKVSVEPQDSHQDAQPRGMFHNIK. A compositionally biased stretch (basic and acidic residues) spans 13-30; sequence EDMHERKVSVEPQDSHQD. The residue at position 21 (serine 21) is a Phosphoserine. Residues 42–61 form a helical membrane-spanning segment; sequence FFVLCHSLLQLTQLMISGYL. At 62-80 the chain is on the extracellular side; the sequence is KSSISTVEKRFGLSSQISG. The chain crosses the membrane as a helical span at residues 81 to 101; that stretch reads LLAAFNEVGNVSLILFVSYFG. Residues 102-107 lie on the Cytoplasmic side of the membrane; sequence SRVHRP. The chain crosses the membrane as a helical span at residues 108–132; it reads RMIGYGALLVATAGLLMALPHFISE. The Extracellular segment spans residues 133–177; sequence PYRYDHSSSDNRSLDFEASLCLPTTMAPASALSNGSCSSHTETKH. N-linked (GlcNAc...) asparagine glycans are attached at residues asparagine 143 and asparagine 166. Residues 178 to 207 form a helical membrane-spanning segment; the sequence is LTMVGIMFAAQTLLGIGGVPIQPFGISYID. The Cytoplasmic segment spans residues 208–226; that stretch reads DFAHHSNSPLYIGILFGIT. A helical transmembrane segment spans residues 227 to 247; the sequence is TMGPGLAYGLGSLMLRLYVDI. Topologically, residues 248-265 are extracellular; it reads DRMPEGGINLTPKDPRWV. The chain crosses the membrane as a helical span at residues 266–290; sequence GAWWLGFLISSGLVVLASSPYFFFP. At 291-355 the chain is on the cytoplasmic side; the sequence is REMPKEKHEF…VKVFPRVLLR (65 aa). Phosphoserine occurs at positions 312 and 315. The helical transmembrane segment at 356-377 threads the bilayer; it reads NLRHPIFLLVVLSQVCTSSMVA. At 378-397 the chain is on the extracellular side; sequence GMATFLPKFLERQFSITASF. A helical transmembrane segment spans residues 398–421; sequence ANMLLGCLTIPLVIVGIMMGGVLV. Residues 422-425 lie on the Cytoplasmic side of the membrane; it reads KRLH. The chain crosses the membrane as a helical span at residues 426-449; the sequence is LSPVQCSALCLLGSLLCLLFSVPL. Over 450–553 the chain is Extracellular; it reads FFIGCSTHQI…SACSRLVLPF (104 aa). A Kazal-like domain is found at 472 to 532; it reads PSLFPGCSEP…VFYTNCSCVA (61 aa). 3 cysteine pairs are disulfide-bonded: cysteine 478-cysteine 509, cysteine 484-cysteine 505, and cysteine 493-cysteine 530. Residues asparagine 527 and asparagine 534 are each glycosylated (N-linked (GlcNAc...) asparagine). A helical membrane pass occupies residues 554–576; sequence IVLFSLGAGLASITHTPSFMLIL. Over 577–585 the chain is Cytoplasmic; the sequence is RGVKKEDKT. Residues 586-611 form a helical membrane-spanning segment; it reads LAVGMQFMLLRVLAWMPSPVIHGSAI. Topologically, residues 612-644 are extracellular; sequence DTTCVHWALTCGRRAVCRYYDHDLLRNRFIGLQ. Residues 645 to 662 traverse the membrane as a helical segment; that stretch reads FFFKSGSLVCFTLVLAIL. The Cytoplasmic portion of the chain corresponds to 663–683; that stretch reads RQQSREASTRTTVKSSELQQL.

It belongs to the organo anion transporter (TC 2.A.60) family. As to expression, expressed in liver, kidney, small intestine mucosa, large intestine, brain, lung, spleen, stomach and heart.

It is found in the cell membrane. Its subcellular location is the basal cell membrane. The protein localises to the apical cell membrane. The enzyme catalyses dehydroepiandrosterone 3-sulfate(out) = dehydroepiandrosterone 3-sulfate(in). It carries out the reaction estrone 3-sulfate(out) = estrone 3-sulfate(in). The catalysed reaction is estrone 3-sulfate(out) + hydrogencarbonate(in) = estrone 3-sulfate(in) + hydrogencarbonate(out). It catalyses the reaction taurocholate(out) = taurocholate(in). The enzyme catalyses coproporphyrin III(out) = coproporphyrin III(in). It carries out the reaction substance P(out) = substance P(in). The catalysed reaction is pregnenolone sulfate(out) = pregnenolone sulfate(in). It catalyses the reaction prostaglandin E2(out) = prostaglandin E2(in). The enzyme catalyses prostaglandin D2(out) = prostaglandin D2(in). It carries out the reaction L-thyroxine(out) = L-thyroxine(in). Functionally, mediates the Na(+)-independent transport of steroid sulfate conjugates such as estrone 3-sulfate (E1S), dehydroepiandrosterone sulfate (DHEA-S) and pregnenolone sulfate (PregS) and other specific organic anions. Responsible for the transport of E1S through the basal membrane of syncytiotrophoblast, highlighting a potential role in the placental absorption of fetal-derived sulfated steroids including DHEA-S. Also facilitates the uptake of sulfated steroids at the basal/sinusoidal membrane of hepatocytes, therefore accounting for the major part of organic anions clearance of liver. Mediates the intestinal uptake of sulfated steroids. Mediates the uptake of the neurosteroids DHEA-S and PregS into the endothelial cells of the blood-brain barrier as the first step to enter the brain. Also plays a role in the reuptake of neuropeptides such as substance P/TAC1 and vasoactive intestinal peptide/VIP released from retinal neurons. May act as a heme transporter that promotes cellular iron availability. Also transports heme by-product coproporphyrin III (CPIII), and may be involved in their hepatic disposition. Mediates the uptake of other substrates such as prostaglandins D2 (PGD2), E1 (PGE1) and E2 (PGE2), taurocholate, L-thyroxine, leukotriene C4 and thromboxane B2. May contribute to regulate the transport of organic compounds in testis across the blood-testis-barrier. Shows a pH-sensitive substrate specificity which may be ascribed to the protonation state of the binding site and leads to a stimulation of substrate transport in an acidic microenvironment. The exact transport mechanism has not been yet deciphered but most likely involves an anion exchange, coupling the cellular uptake of organic substrate with the efflux of an anionic compound. Hydrogencarbonate/HCO3(-) acts as a probable counteranion that exchanges for organic anions. Cytoplasmic glutamate may also act as counteranion in the placenta. An inwardly directed proton gradient has also been proposed as the driving force of E1S uptake with a (H(+):E1S) stoichiometry of (1:1). The sequence is that of Solute carrier organic anion transporter family member 2B1 from Mus musculus (Mouse).